A 346-amino-acid chain; its full sequence is MHFEEKIALNKALFSSLYDKEIQCFKSPLKAYRTRAEFCIYHHENGEISYAMYENKKKIPIKNFEIADEKIQAYMPILLDNLNENLKHKLFGVEFLATKIDLSITLLYHKNIESITQDLQELSKKLNLKLIARSRGKKLVFNGENLKQILNIKNKEIFYEFNNDCFIQPNTTINEKMIEWVIDLLEKEERKDLLELYCGYGNFTIALAKYFNKILATEISKKNIEFALKNCDLNSIKNISFTRLSSEELSQALKKEREFNRLKGIDLDGFNISHVLVDPPRAGLDVSVIELIKKYENIIYISCNPITLRENLEILSQSHEILNLAFFDQFANTSHLECGVHLRLKA.

S-adenosyl-L-methionine-binding residues include Gln-168, Tyr-197, Asn-202, Glu-218, and Asp-278. Cys-303 functions as the Nucleophile in the catalytic mechanism. Glu-337 serves as the catalytic Proton acceptor.

It belongs to the class I-like SAM-binding methyltransferase superfamily. RNA M5U methyltransferase family. TrmA subfamily.

It carries out the reaction uridine(54) in tRNA + S-adenosyl-L-methionine = 5-methyluridine(54) in tRNA + S-adenosyl-L-homocysteine + H(+). The catalysed reaction is uridine(341) in tmRNA + S-adenosyl-L-methionine = 5-methyluridine(341) in tmRNA + S-adenosyl-L-homocysteine + H(+). Its function is as follows. Dual-specificity methyltransferase that catalyzes the formation of 5-methyluridine at position 54 (m5U54) in all tRNAs, and that of position 341 (m5U341) in tmRNA (transfer-mRNA). The polypeptide is tRNA/tmRNA (uracil-C(5))-methyltransferase (Campylobacter lari (strain RM2100 / D67 / ATCC BAA-1060)).